Consider the following 147-residue polypeptide: Hemoglobin subunit beta (147 aa).

A Globin domain is found at histidine 3–histidine 147. Heme b is bound by residues histidine 64 and histidine 93.

This sequence belongs to the globin family. In terms of assembly, heterotetramer of two alpha chains and two beta chains. In terms of tissue distribution, red blood cells.

Involved in oxygen transport from the lung to the various peripheral tissues. This is Hemoglobin subunit beta (HBB) from Cairina moschata (Muscovy duck).